A 134-amino-acid chain; its full sequence is DNA-binding protein StpA (134 aa).

Positions 73–94 (EELLGNSSAAAPRAGKKRQPRP) are disordered. The DNA-binding element occupies 112 to 117 (QGRTPK).

It belongs to the histone-like protein H-NS family. As to quaternary structure, forms homodimers, can interact with H-NS. May interact with Hha and/or Cnu.

It localises to the cytoplasm. It is found in the nucleoid. Functionally, a DNA-binding protein that acts in a fashion similar to H-NS, repressing gene transcription. A subset of H-NS/StpA-regulated genes require auxillary proteins for repression; these auxillary proteins (Hha and other similar proteins) may also modulate oligomerization of the H-NS/StpA complex. The polypeptide is DNA-binding protein StpA (stpA) (Escherichia coli O157:H7).